Consider the following 365-residue polypeptide: N-acetylgalactosamine-N,N'-diacetylbacillosaminyl-diphospho-undecaprenol 4-alpha-N-acetylgalactosaminyltransferase (365 aa).

The protein belongs to the glycosyltransferase group 1 family.

The protein localises to the cell inner membrane. It carries out the reaction N-acetyl-alpha-D-galactosaminyl-(1-&gt;3)-N,N'-diacetyl-alpha-D-bacillosaminyl-tri-trans,hepta-cis-undecaprenyl diphosphate + UDP-N-acetyl-alpha-D-galactosamine = N-acetyl-alpha-D-galactosaminyl-(1-&gt;4)-N-acetyl-alpha-D-galactosaminyl-(1-&gt;3)-N,N'-diacetyl-alpha-D-bacillosaminyl-tri-trans,heptacis-undecaprenyl diphosphate + UDP + H(+). The protein operates within protein modification; protein glycosylation. Its function is as follows. Adds a GalNAc residue on to the Und-PP-Bac2,4diNAc-GalNAc disaccharide in the N-linked protein glycosylation pathway. Transfers the third sugar in the heptasaccharide biosynthesis. The polypeptide is N-acetylgalactosamine-N,N'-diacetylbacillosaminyl-diphospho-undecaprenol 4-alpha-N-acetylgalactosaminyltransferase (pglJ) (Campylobacter jejuni subsp. jejuni serotype O:2 (strain ATCC 700819 / NCTC 11168)).